A 239-amino-acid chain; its full sequence is Increased recombination centers protein 22-2 (239 aa).

A signal peptide spans 1 to 19; the sequence is MKLSTIFTAFAATIATVAG. Residues 20 to 161 are Lumenal-facing; that stretch reads YETTGSKQTV…AAVSFFDPRL (142 aa). A helical membrane pass occupies residues 162 to 182; that stretch reads IFLELVLLITFAGLIYVGYEI. Residues 183-239 lie on the Cytoplasmic side of the membrane; that stretch reads WGKQYFKGVAPVKAKKVSAAKASSPVASGPSTTSATGYDTNWIPESHLKQKKTKKVN. Over residues 201-213 the composition is skewed to low complexity; it reads AAKASSPVASGPS. Positions 201–222 are disordered; sequence AAKASSPVASGPSTTSATGYDT.

The protein belongs to the IRC22 family.

It is found in the endoplasmic reticulum membrane. Is probably involved in a pathway contributing to genomic integrity. This chain is Increased recombination centers protein 22-2 (IRC22-2), found in Candida albicans (strain WO-1) (Yeast).